A 154-amino-acid polypeptide reads, in one-letter code: Fibroblast growth factor 2 (154 aa).

A propeptide spanning residues 1–9 is cleaved from the precursor; sequence MAAGSITSL. The disordered stretch occupies residues 1–20; the sequence is MAAGSITSLPALPEDGGGAF. Heparin is bound at residue Asn35. A Phosphotyrosine; by TEC modification is found at Tyr81. Residue Lys94 forms a Glycyl lysine isopeptide (Lys-Gly) (interchain with G-Cter in SUMO1) linkage. Residues 127-143 form a heparin-binding region; the sequence is KRTGQYKLGSKTGPGQK.

The protein belongs to the heparin-binding growth factors family. Monomer. Homodimer. Interacts with FGFR1, FGFR2, FGFR3 and FGFR4. Affinity between fibroblast growth factors (FGFs) and their receptors is increased by heparan sulfate glycosaminoglycans that function as coreceptors. Interacts with CSPG4, FGFBP1 and TEC. Found in a complex with FGFBP1, FGF1 and FGF2. Interacts with FGFBP3. Interacts with integrin ITGAV:ITGB3; the interaction is required for FGF2 signaling. Interacts with SNORC (via the extracellular domain). Interacts with GPC3. Phosphorylation at Tyr-81 regulates FGF2 unconventional secretion. Found in all tissues examined.

The protein resides in the secreted. It localises to the nucleus. Acts as a ligand for FGFR1, FGFR2, FGFR3 and FGFR4. Also acts as an integrin ligand which is required for FGF2 signaling. Binds to integrin ITGAV:ITGB3. Plays an important role in the regulation of cell survival, cell division, cell differentiation and cell migration. Functions as a potent mitogen in vitro. Can induce angiogenesis. Mediates phosphorylation of ERK1/2 and thereby promotes retinal lens fiber differentiation. This is Fibroblast growth factor 2 (Fgf2) from Rattus norvegicus (Rat).